Consider the following 451-residue polypeptide: Serine--tRNA ligase (451 aa).

An L-serine-binding site is contributed by 258 to 260 (TSE). 289 to 291 (RSE) contacts ATP. E312 is a binding site for L-serine. 376-379 (EISS) contributes to the ATP binding site. An L-serine-binding site is contributed by S411.

This sequence belongs to the class-II aminoacyl-tRNA synthetase family. Type-1 seryl-tRNA synthetase subfamily. As to quaternary structure, homodimer. The tRNA molecule binds across the dimer.

Its subcellular location is the cytoplasm. It catalyses the reaction tRNA(Ser) + L-serine + ATP = L-seryl-tRNA(Ser) + AMP + diphosphate + H(+). The catalysed reaction is tRNA(Sec) + L-serine + ATP = L-seryl-tRNA(Sec) + AMP + diphosphate + H(+). Its pathway is aminoacyl-tRNA biosynthesis; selenocysteinyl-tRNA(Sec) biosynthesis; L-seryl-tRNA(Sec) from L-serine and tRNA(Sec): step 1/1. In terms of biological role, catalyzes the attachment of serine to tRNA(Ser). Is also able to aminoacylate tRNA(Sec) with serine, to form the misacylated tRNA L-seryl-tRNA(Sec), which will be further converted into selenocysteinyl-tRNA(Sec). The chain is Serine--tRNA ligase from Bordetella bronchiseptica (strain ATCC BAA-588 / NCTC 13252 / RB50) (Alcaligenes bronchisepticus).